The chain runs to 282 residues: NH(3)-dependent NAD(+) synthetase (282 aa).

Position 51 to 58 (G51 to S58) interacts with ATP. A Mg(2+)-binding site is contributed by D57. Position 148 (R148) interacts with deamido-NAD(+). T168 serves as a coordination point for ATP. E173 is a Mg(2+) binding site. Deamido-NAD(+) is bound by residues K181 and D188. ATP-binding residues include K197 and T219. H268–K269 contacts deamido-NAD(+).

This sequence belongs to the NAD synthetase family. As to quaternary structure, homodimer.

It carries out the reaction deamido-NAD(+) + NH4(+) + ATP = AMP + diphosphate + NAD(+) + H(+). It participates in cofactor biosynthesis; NAD(+) biosynthesis; NAD(+) from deamido-NAD(+) (ammonia route): step 1/1. In terms of biological role, catalyzes the ATP-dependent amidation of deamido-NAD to form NAD. Uses ammonia as a nitrogen source. In Burkholderia ambifaria (strain MC40-6), this protein is NH(3)-dependent NAD(+) synthetase.